Here is a 100-residue protein sequence, read N- to C-terminus: MRGAAPTVADLNLELNDLVLPANLLSEEVLQSSDDEYEITEEESVVPFRIDTCCYRCEVAVRITLYAAELGLRTLEQLLVEGKLTFCCTACARSLNRNGR.

The segment at 1 to 42 (MRGAAPTVADLNLELNDLVLPANLLSEEVLQSSDDEYEITEE) is E7 terminal domain. A zinc finger lies at 54–91 (CYRCEVAVRITLYAAELGLRTLEQLLVEGKLTFCCTAC). A Nuclear export signal motif is present at residues 72 to 80 (LRTLEQLLV).

Belongs to the papillomaviridae E7 protein family. Homodimer. Homooligomer. Interacts with host RB1; this interaction induces dissociation of RB1-E2F1 complex thereby disrupting RB1 activity. Interacts with host EP300; this interaction represses EP300 transcriptional activity. Interacts with protein E2; this interaction inhibits E7 oncogenic activity. Interacts with host TMEM173/STING; this interaction impairs the ability of TMEM173/STING to sense cytosolic DNA and promote the production of type I interferon (IFN-alpha and IFN-beta). In terms of processing, highly phosphorylated.

Its subcellular location is the host cytoplasm. It is found in the host nucleus. In terms of biological role, plays a role in viral genome replication by driving entry of quiescent cells into the cell cycle. Stimulation of progression from G1 to S phase allows the virus to efficiently use the cellular DNA replicating machinery to achieve viral genome replication. E7 protein has both transforming and trans-activating activities. Induces the disassembly of the E2F1 transcription factor from RB1, with subsequent transcriptional activation of E2F1-regulated S-phase genes. Interferes with host histone deacetylation mediated by HDAC1 and HDAC2, leading to transcription activation. Also plays a role in the inhibition of both antiviral and antiproliferative functions of host interferon alpha. Interaction with host TMEM173/STING impairs the ability of TMEM173/STING to sense cytosolic DNA and promote the production of type I interferon (IFN-alpha and IFN-beta). The polypeptide is Protein E7 (Human papillomavirus 4).